A 192-amino-acid polypeptide reads, in one-letter code: Natural cytotoxicity triggering receptor 3 (192 aa).

An N-terminal signal peptide occupies residues 1–18; it reads MAKVLLIVFIMVYAGSCA. Positions 19-126 constitute an Ig-like domain; that stretch reads IWVSQPPEIR…VGTGNGTRLV (108 aa). The Extracellular segment spans residues 19-147; that stretch reads IWVSQPPEIR…AEPERAAYTS (129 aa). Cys39 and Cys108 form a disulfide bridge. N-linked (GlcNAc...) asparagine glycosylation is found at Asn42 and Asn121. Residues 148 to 168 traverse the membrane as a helical segment; that stretch reads LLLRAGVYALSFLSVATGSVI. Topologically, residues 169–192 are cytoplasmic; the sequence is YYQGKCLCHVGNTATPPTASEERF.

Belongs to the natural cytotoxicity receptor (NCR) family. In terms of assembly, homodimer in the unliganted form. Interacts with CD3Z. Interacts with and is activated by binding to NCR3LG1. Interacts with and is activated by binding to BAG6. Interacts with and is inhibited by binding to LGALS3.

The protein resides in the cell membrane. Cell membrane receptor of natural killer/NK cells that is activated by binding of extracellular ligands including BAG6 and NCR3LG1. Stimulates NK cells cytotoxicity toward neighboring cells producing these ligands. It controls, for instance, NK cells cytotoxicity against tumor cells. Engagement of NCR3 by BAG6 also promotes myeloid dendritic cells (DC) maturation, both through killing DCs that did not acquire a mature phenotype, and inducing the release by NK cells of TNFA and IFNG that promote DC maturation. The sequence is that of Natural cytotoxicity triggering receptor 3 (Ncr3) from Rattus norvegicus (Rat).